We begin with the raw amino-acid sequence, 367 residues long: Histidinol-phosphate aminotransferase (367 aa).

An N6-(pyridoxal phosphate)lysine modification is found at lysine 222.

Belongs to the class-II pyridoxal-phosphate-dependent aminotransferase family. Histidinol-phosphate aminotransferase subfamily. Pyridoxal 5'-phosphate is required as a cofactor.

The catalysed reaction is L-histidinol phosphate + 2-oxoglutarate = 3-(imidazol-4-yl)-2-oxopropyl phosphate + L-glutamate. It participates in amino-acid biosynthesis; L-histidine biosynthesis; L-histidine from 5-phospho-alpha-D-ribose 1-diphosphate: step 7/9. This Methanosphaera stadtmanae (strain ATCC 43021 / DSM 3091 / JCM 11832 / MCB-3) protein is Histidinol-phosphate aminotransferase.